A 642-amino-acid polypeptide reads, in one-letter code: Threonine--tRNA ligase (642 aa).

The 61-residue stretch at 1–61 folds into the TGS domain; it reads MPVITLPDGS…DTDAQLAIIT (61 aa). The segment at 243-534 is catalytic; it reads DHRKIGKQLD…LTEEFAGFFP (292 aa). Residues Cys-334, His-385, and His-511 each coordinate Zn(2+).

It belongs to the class-II aminoacyl-tRNA synthetase family. In terms of assembly, homodimer. The cofactor is Zn(2+).

The protein localises to the cytoplasm. The catalysed reaction is tRNA(Thr) + L-threonine + ATP = L-threonyl-tRNA(Thr) + AMP + diphosphate + H(+). Functionally, catalyzes the attachment of threonine to tRNA(Thr) in a two-step reaction: L-threonine is first activated by ATP to form Thr-AMP and then transferred to the acceptor end of tRNA(Thr). Also edits incorrectly charged L-seryl-tRNA(Thr). In Pectobacterium carotovorum subsp. carotovorum (strain PC1), this protein is Threonine--tRNA ligase.